Consider the following 151-residue polypeptide: Putative pre-16S rRNA nuclease (151 aa).

The protein belongs to the YqgF nuclease family.

Its subcellular location is the cytoplasm. In terms of biological role, could be a nuclease involved in processing of the 5'-end of pre-16S rRNA. This Thermosynechococcus vestitus (strain NIES-2133 / IAM M-273 / BP-1) protein is Putative pre-16S rRNA nuclease.